A 325-amino-acid chain; its full sequence is E3 ubiquitin-protein ligase SIAH2 (325 aa).

Residues 1 to 15 (MSRPSSTGPSANKPC) show a composition bias toward polar residues. Positions 1 to 43 (MSRPSSTGPSANKPCSKQPPPPQTPHAPSPAAPPAAATISAAG) are disordered. At Ser-6 the chain carries Phosphoserine. Ser-16 is subject to Phosphoserine; by DYRK2. The span at 17–33 (KQPPPPQTPHAPSPAAP) shows a compositional bias: pro residues. Position 24 is a phosphothreonine; by MAPK14 (Thr-24). At Ser-29 the chain carries Phosphoserine; by DYRK2 and MAPK14. The segment covering 34-43 (PAAATISAAG) has biased composition (low complexity). Residue Ser-69 is modified to Phosphoserine; by DYRK2. An RING-type zinc finger spans residues 81-116 (CPVCFDYVLPPILQCQAGHLVCNQCRQKLSCCPTCR). Thr-120 is subject to Phosphothreonine; by DYRK2. The segment at 131–323 (VASAVLFPCK…LGINVTISTC (193 aa)) is SBD. The segment at 134–194 (AVLFPCKYAT…VMSHLMHAHK (61 aa)) adopts an SIAH-type zinc-finger fold. Residues Cys-139, Cys-146, His-158, Cys-162, Cys-169, Cys-176, His-188, and His-193 each contribute to the Zn(2+) site.

It belongs to the SINA (Seven in absentia) family. Homodimer. Interacts with VAV1, without mediating its ubiquitin-mediated degradation. Probable component of some large E3 complex possibly composed of UBE2D1, SIAH2, CACYBP/SIP, SKP1, APC and TBL1X. Interacts with UBE2I. Interacts with UBE2E2. Interacts with PEG10, which may inhibit its activity. Interacts with PEG3 and EGLN2. Interacts with DYRK2. Interacts with SNCAIP. Interacts with NR1D1 and NR1D2. Interacts with DCC. Interacts with AXIN1. Phosphorylated at Thr-24 and Ser-29 by MAPK14, which mediates the degradation by the proteasome of EGLN3. Phosphorylated at Ser-29 by DYRK2; this increases the ubiquitin ligase activity and promotes degradation of EGLN3. As to expression, detected in brain (at protein level).

The protein localises to the cytoplasm. Its subcellular location is the nucleus. The catalysed reaction is S-ubiquitinyl-[E2 ubiquitin-conjugating enzyme]-L-cysteine + [acceptor protein]-L-lysine = [E2 ubiquitin-conjugating enzyme]-L-cysteine + N(6)-ubiquitinyl-[acceptor protein]-L-lysine.. It functions in the pathway protein modification; protein ubiquitination. E3 ubiquitin-protein ligase that mediates ubiquitination and subsequent proteasomal degradation of target proteins. E3 ubiquitin ligases accept ubiquitin from an E2 ubiquitin-conjugating enzyme in the form of a thioester and then directly transfers the ubiquitin to targeted substrates. Mediates E3 ubiquitin ligase activity either through direct binding to substrates or by functioning as the essential RING domain subunit of larger E3 complexes. Mediates ubiquitination and proteasomal degradation of DYRK2 in response to hypoxia. Promotes monoubiquitination of SNCA. Triggers the ubiquitin-mediated degradation of many substrates, including proteins involved in transcription regulation (GPS2, POU2AF1, PML, NCOR1), a cell surface receptor (DCC), an antiapoptotic protein (BAG1), and a protein involved in synaptic vesicle function in neurons (SYP). It is thereby involved in apoptosis, tumor suppression, cell cycle, transcription and signaling processes. Has some overlapping function with SIAH1. Triggers the ubiquitin-mediated degradation of TRAF2, whereas SIAH1 does not. Regulates cellular clock function via ubiquitination of circadian transcriptional repressors NR1D1 and NR1D2 leading to their proteasomal degradation. Plays an important role in mediating the rhythmic degradation/clearance of NR1D1 and NR1D2 contributing to their circadian profile of protein abundance. Mediates ubiquitination and degradation of EGLN2 and EGLN3 in response to the unfolded protein response (UPR), leading to their degradation and subsequent stabilization of ATF4. Also part of the Wnt signaling pathway in which it mediates the Wnt-induced ubiquitin-mediated proteasomal degradation of AXIN1. This Rattus norvegicus (Rat) protein is E3 ubiquitin-protein ligase SIAH2 (Siah2).